A 288-amino-acid polypeptide reads, in one-letter code: Glycine--tRNA ligase alpha subunit (288 aa).

The protein belongs to the class-II aminoacyl-tRNA synthetase family. As to quaternary structure, tetramer of two alpha and two beta subunits.

The protein resides in the cytoplasm. The enzyme catalyses tRNA(Gly) + glycine + ATP = glycyl-tRNA(Gly) + AMP + diphosphate. This is Glycine--tRNA ligase alpha subunit from Rickettsia massiliae (strain Mtu5).